Consider the following 590-residue polypeptide: Pescadillo homolog (590 aa).

A disordered region spans residues 297–318 (AKADAGEEEEVEEEEEVEDDGL). Residues 302-318 (GEEEEVEEEEEVEDDGL) show a composition bias toward acidic residues. Positions 337–446 (TAGQLFSNFT…KLLPVSEYAP (110 aa)) constitute a BRCT domain. Residues 452–590 (AHLSPWGDAG…RKLNEKKEKR (139 aa)) are disordered. Over residues 471–499 (DASDDDEDDEDIEVAPEDYDKDDEEEEAE) the composition is skewed to acidic residues. The stretch at 489-589 (YDKDDEEEEA…RRKLNEKKEK (101 aa)) forms a coiled coil. 3 stretches are compositionally biased toward basic and acidic residues: residues 500–517 (AEAK…KGTK), 532–547 (DKMT…DKKL), and 567–577 (NDKKSDREAEL).

Belongs to the pescadillo family. Component of the NOP7 complex, composed of ERB1, NOP7 and YTM1. The complex is held together by ERB1, which interacts with NOP7 via its N-terminal domain and with YTM1 via a high-affinity interaction between the seven-bladed beta-propeller domains of the 2 proteins. The NOP7 complex associates with the 66S pre-ribosome.

The protein resides in the nucleus. It is found in the nucleolus. The protein localises to the nucleoplasm. Component of the NOP7 complex, which is required for maturation of the 25S and 5.8S ribosomal RNAs and formation of the 60S ribosome. This Yarrowia lipolytica (strain CLIB 122 / E 150) (Yeast) protein is Pescadillo homolog.